The following is a 114-amino-acid chain: Phosphorelay protein LuxU (114 aa).

The 96-residue stretch at 19-114 (GSDNVPVLLD…TRDAYRSWTN (96 aa)) folds into the HPt domain. A Phosphohistidine modification is found at H58.

As to quaternary structure, monomer.

Phosphorelay protein which receives sensory signals from LuxN and LuxP and transmits them to LuxO, at low cell density. LuxN and LuxP transfer a phosphoryl group to LuxU on His-58 and this phosphoryl group is further transferred to LuxO. At high cell density, as LuxU could function to establish an equilibrium between the aspartyl-phosphate of LuxN and the aspartyl-phosphate of LuxO, LuxU transfers phosphate from LuxO to LuxN (and probably LuxP) and finally phosphate is drained from the system. This Vibrio harveyi (Beneckea harveyi) protein is Phosphorelay protein LuxU (luxU).